Here is a 303-residue protein sequence, read N- to C-terminus: Proteasome subunit beta (303 aa).

Positions 1–67 (MTWQFPDRLS…SGGTGQLPHG (67 aa)) are cleaved as a propeptide — removed in mature form; by autocatalysis. Threonine 68 functions as the Nucleophile in the catalytic mechanism.

The protein belongs to the peptidase T1B family. In terms of assembly, the 20S proteasome core is composed of 14 alpha and 14 beta subunits that assemble into four stacked heptameric rings, resulting in a barrel-shaped structure. The two inner rings, each composed of seven catalytic beta subunits, are sandwiched by two outer rings, each composed of seven alpha subunits. The catalytic chamber with the active sites is on the inside of the barrel. Has a gated structure, the ends of the cylinder being occluded by the N-termini of the alpha-subunits. Is capped by the proteasome-associated ATPase, ARC.

It is found in the cytoplasm. The catalysed reaction is Cleavage of peptide bonds with very broad specificity.. It participates in protein degradation; proteasomal Pup-dependent pathway. With respect to regulation, the formation of the proteasomal ATPase ARC-20S proteasome complex, likely via the docking of the C-termini of ARC into the intersubunit pockets in the alpha-rings, may trigger opening of the gate for substrate entry. Interconversion between the open-gate and close-gate conformations leads to a dynamic regulation of the 20S proteasome proteolysis activity. Its function is as follows. Component of the proteasome core, a large protease complex with broad specificity involved in protein degradation. The chain is Proteasome subunit beta from Mycolicibacterium paratuberculosis (strain ATCC BAA-968 / K-10) (Mycobacterium paratuberculosis).